Consider the following 68-residue polypeptide: Antimicrobial peptide UyCT3 (68 aa).

Residues 1–23 (MKNQFVLLLLAIVFLQMIFQSDA) form the signal peptide. At Phe-36 the chain carries Phenylalanine amide. A propeptide spanning residues 40–68 (GLENMDKFDELFDGDLSEADLDFLKELMR) is cleaved from the precursor.

Belongs to the non-disulfide-bridged peptide (NDBP) superfamily. Short antimicrobial peptide (group 4) family. In terms of processing, the non-amidated UyCT3 does not show antimicrobial activity. As to expression, expressed by the venom gland.

The protein localises to the secreted. It localises to the target cell membrane. Its function is as follows. Antimicrobial peptide that inhibits the growth of Gram-positive (S.aureus, MIC=10 uM) and Gram-negative bacteria (E.coli, MIC=15 uM and P.aeruginosa, MIC=6 uM). It also shows 35% of hemolysis when 15 uM are tested (95% at 50 uM). The polypeptide is Antimicrobial peptide UyCT3 (Urodacus yaschenkoi (Inland robust scorpion)).